Consider the following 505-residue polypeptide: Forkhead box protein O4 (505 aa).

The span at 1–10 (MDPGNENSAT) shows a compositional bias: polar residues. Disordered regions lie at residues 1 to 100 (MDPG…RRNA) and 176 to 246 (SWWM…CSRN). The residue at position 32 (Thr32) is a Phosphothreonine; by PKB/AKT1. The span at 54-64 (LGEKVHTEGRS) shows a compositional bias: basic and acidic residues. Positions 100–188 (AWGNQSYAEL…MLNPEGGKSG (89 aa)) form a DNA-binding region, fork-head. The residue at position 197 (Ser197) is a Phosphoserine; by PKB/AKT1. The span at 205–216 (LRGRSKAPKKKP) shows a compositional bias: basic residues. Ser262 carries the post-translational modification Phosphoserine; by PKB/AKT1.

In terms of assembly, interacts with CREBBP/CBP, CTNNB1, MYOCD, SIRT1, SRF and YWHAZ. Acetylated by CREBBP/CBP and deacetylated by SIRT1. Binding of YWHAZ inhibits DNA-binding. Interacts with USP7; the interaction is enhanced in presence of hydrogen peroxide and occurs independently of TP53. Interacts with NLK, and this inhibits monoubiquitination and transcriptional activity. Interacts with FOXK1; the interaction inhibits MEF2C transactivation activity. Acetylation by CREBBP/CBP, which is induced by peroxidase stress, inhibits transcriptional activity. Deacetylation by SIRT1 is NAD-dependent and stimulates transcriptional activity. In terms of processing, phosphorylation by PKB/AKT1 inhibits transcriptional activity and is responsible for cytoplasmic localization. May be phosphorylated at multiple sites by NLK. Post-translationally, monoubiquitinated; monoubiquitination is induced by oxidative stress and reduced by deacetylase inhibitors; results in its relocalization to the nucleus and its increased transcriptional activity. Deubiquitinated by USP7; deubiquitination is induced by oxidative stress; enhances its interaction with USP7 and consequently, deubiquitination; increases its translocation to the cytoplasm and inhibits its transcriptional activity. Hydrogene-peroxide-induced ubiquitination and USP7-mediated deubiquitination have no major effect on its protein stability. In terms of tissue distribution, heart, brain, placenta, lung, liver, skeletal muscle, kidney and pancreas. Isoform zeta is most abundant in the liver, kidney, and pancreas.

It is found in the cytoplasm. The protein localises to the nucleus. Its function is as follows. Transcription factor involved in the regulation of the insulin signaling pathway. Binds to insulin-response elements (IREs) and can activate transcription of IGFBP1. Down-regulates expression of HIF1A and suppresses hypoxia-induced transcriptional activation of HIF1A-modulated genes. Also involved in negative regulation of the cell cycle. Involved in increased proteasome activity in embryonic stem cells (ESCs) by activating expression of PSMD11 in ESCs, leading to enhanced assembly of the 26S proteasome, followed by higher proteasome activity. The protein is Forkhead box protein O4 (FOXO4) of Homo sapiens (Human).